The chain runs to 245 residues: DNA polymerase sliding clamp (245 aa).

The protein belongs to the PCNA family. In terms of assembly, homotrimer. The subunits circularize to form a toroid; DNA passes through its center. Replication factor C (RFC) is required to load the toroid on the DNA.

Sliding clamp subunit that acts as a moving platform for DNA processing. Responsible for tethering the catalytic subunit of DNA polymerase and other proteins to DNA during high-speed replication. In Methanosarcina acetivorans (strain ATCC 35395 / DSM 2834 / JCM 12185 / C2A), this protein is DNA polymerase sliding clamp.